The primary structure comprises 501 residues: MAINAQEISALIKKQIENFQPNFDVTETGVVTYIGDGIARARGLDNAMSGELLEFSNGVFGMAQNLESNDVGIIILGDFYTIREGDEVKRTGKIMEVPVGEALIGRVVNPLGQPIDGLGDIKTTATRPVEAPAPGVMQRKSVSEPLQTGLKAVDALVPIGRGQRELIIGDRQTGKTSVAIDAILNQKGQDVICIYVAIGQKESTVRTQVESLRKHGALDYTIVVTASASQPSPLLYIAPYAGVAMAEEFMYNGKHVLIVYDDLSKQAVAYRELSLLLRRPPGREAYPGDVFYLHSRLLERSAKLSDDLGGGSITALPIIQTQAGDISAYIATNVISITDGQIFLQENLFNSGIRPAIDAGSSVSRVGGSAQIKAMKKVAGTLRLDLASYRELEAFTQFGSDLDAATQAKLNRGRRTVEVLKQPLHKPLPVEKQVLILYALTHGFLDSVPVDQILDFEEALYDYFDSHHEDIFETIRSTKDLPEEAVLNEAIQAFKDQSEYK.

An ATP-binding site is contributed by 169 to 176 (GDRQTGKT).

This sequence belongs to the ATPase alpha/beta chains family. In terms of assembly, F-type ATPases have 2 components, CF(1) - the catalytic core - and CF(0) - the membrane proton channel. CF(1) has five subunits: alpha(3), beta(3), gamma(1), delta(1), epsilon(1). CF(0) has three main subunits: a(1), b(2) and c(9-12). The alpha and beta chains form an alternating ring which encloses part of the gamma chain. CF(1) is attached to CF(0) by a central stalk formed by the gamma and epsilon chains, while a peripheral stalk is formed by the delta and b chains.

It localises to the cell membrane. The catalysed reaction is ATP + H2O + 4 H(+)(in) = ADP + phosphate + 5 H(+)(out). In terms of biological role, produces ATP from ADP in the presence of a proton gradient across the membrane. The alpha chain is a regulatory subunit. This is ATP synthase subunit alpha from Streptococcus thermophilus (strain CNRZ 1066).